Consider the following 944-residue polypeptide: MSDYKSTLNLPKTGFPMRANLANREPNMLKNWYSNDLYGKIRAAKKGKKTFILHDGPPYANGDIHIGHSVNKILKDIIIKSKTLSDFDAPYIPGWDCHGLPIELKVEQKVGKPGKKISAAEFRKKCREYAARQVDGQRKDFKRLGVLGEWDKPYLTMDFGTEANIVRALAQVIKNDHLHKGSKPVHWCTECGSALAEAEVEYEDKLSPAIDVAFSAVDNEQVLNCFSAVTDNLGEGNVSAVIWTTTPWTLPANRAIALAQKVEYSLVQAGERRLIIATDLVADCLKRYGNEDFSTLAICKGIDLEKQLFNHPFLDLQVPAILADYVTVDAGTGCVHTAPGHGQDDYAVGLRYDLEVANYVADNGVFRDDTEFFAGLHVFKANDRVLEVLAERNALLCSIKLNHSYPHCWRHKTPIIFRATPQWFIAMDQKSLRADALAEIQAVKWIPSWGQQRIEKMVENRPDWCISRQRTWGVPITLFVHKETDELHPNSVEMMELIARKIEIDGIQAWWDLEPETLLGFEAEEYRKVTDTLDVWFDSGTTHASVVAKREEYTLESGEQAAADMYLEGSDQHRGWFQSSLMTSMAINNKAPYKEVLTHGFVVDGNGKKMSKSLGNVMSPQTVMNNLGADILRLWVASTDYTGEMTVSDEILNRSADSYRRIRNTSRFLLANLNGFDPTTDLVPNEEMVALDRWIVAQTLILQNDVIEAYESYSLHAVYQKLTHFCSIELGSFYLDIIKDRQYTAKADSNAHRSCQTALFHIAEALVRLMAPILSFTADEIWARLPGARDEFVFTTVWYDGLFSLSDNEALSSAAWSKLTLVRAEVNKALEIARKENAIGGGLEAEVILYASDEIATLLTTLEDELRFVLITSQAQVKPLADAPQLALKTEVTGLLVSVVKSAAPKCERCWHHREEVGQNKQHPELCGRCVTNIEGQGEIRKFA.

Residues 58–68 carry the 'HIGH' region motif; the sequence is PYANGDIHIGH. L-isoleucyl-5'-AMP is bound at residue glutamate 568. The short motif at 609–613 is the 'KMSKS' region element; sequence KMSKS. Lysine 612 provides a ligand contact to ATP. The Zn(2+) site is built by cysteine 907, cysteine 910, cysteine 927, and cysteine 930.

It belongs to the class-I aminoacyl-tRNA synthetase family. IleS type 1 subfamily. Monomer. It depends on Zn(2+) as a cofactor.

It localises to the cytoplasm. It carries out the reaction tRNA(Ile) + L-isoleucine + ATP = L-isoleucyl-tRNA(Ile) + AMP + diphosphate. Functionally, catalyzes the attachment of isoleucine to tRNA(Ile). As IleRS can inadvertently accommodate and process structurally similar amino acids such as valine, to avoid such errors it has two additional distinct tRNA(Ile)-dependent editing activities. One activity is designated as 'pretransfer' editing and involves the hydrolysis of activated Val-AMP. The other activity is designated 'posttransfer' editing and involves deacylation of mischarged Val-tRNA(Ile). The chain is Isoleucine--tRNA ligase from Psychromonas ingrahamii (strain DSM 17664 / CCUG 51855 / 37).